The primary structure comprises 88 residues: MALLDFFLSRKKNTANIAKERLQIIVAERRRSDAEPHYLPQLRKDILDVICKYVQIDPEMVTVQLEQKDGDISILELNVTLPEAEELK.

It belongs to the MinE family.

Its function is as follows. Prevents the cell division inhibition by proteins MinC and MinD at internal division sites while permitting inhibition at polar sites. This ensures cell division at the proper site by restricting the formation of a division septum at the midpoint of the long axis of the cell. The polypeptide is Cell division topological specificity factor (Escherichia fergusonii (strain ATCC 35469 / DSM 13698 / CCUG 18766 / IAM 14443 / JCM 21226 / LMG 7866 / NBRC 102419 / NCTC 12128 / CDC 0568-73)).